A 242-amino-acid chain; its full sequence is Myogenic factor 6 (242 aa).

The tract at residues 31–63 (SPLYPGSDGTLSPCQDQMPPEAGSDSSGEEHVL) is disordered. The region spanning 93–144 (DRRKAATLRERRRLKKINEAFEALKRRTVANPNQRLPKVEILRSAINYIERL) is the bHLH domain.

In terms of assembly, efficient DNA binding requires dimerization with another bHLH protein. Interacts with CSRP3.

It is found in the nucleus. Functionally, involved in muscle differentiation (myogenic factor). Induces fibroblasts to differentiate into myoblasts. Probable sequence specific DNA-binding protein. The chain is Myogenic factor 6 (MYF6) from Bos taurus (Bovine).